A 447-amino-acid polypeptide reads, in one-letter code: Na(+)-translocating NADH-quinone reductase subunit A (447 aa).

Belongs to the NqrA family. In terms of assembly, composed of six subunits; NqrA, NqrB, NqrC, NqrD, NqrE and NqrF.

It carries out the reaction a ubiquinone + n Na(+)(in) + NADH + H(+) = a ubiquinol + n Na(+)(out) + NAD(+). Its function is as follows. NQR complex catalyzes the reduction of ubiquinone-1 to ubiquinol by two successive reactions, coupled with the transport of Na(+) ions from the cytoplasm to the periplasm. NqrA to NqrE are probably involved in the second step, the conversion of ubisemiquinone to ubiquinol. This Photorhabdus laumondii subsp. laumondii (strain DSM 15139 / CIP 105565 / TT01) (Photorhabdus luminescens subsp. laumondii) protein is Na(+)-translocating NADH-quinone reductase subunit A.